A 115-amino-acid polypeptide reads, in one-letter code: Large ribosomal subunit protein bL19 (115 aa).

The protein belongs to the bacterial ribosomal protein bL19 family.

This protein is located at the 30S-50S ribosomal subunit interface and may play a role in the structure and function of the aminoacyl-tRNA binding site. This is Large ribosomal subunit protein bL19 from Streptococcus uberis (strain ATCC BAA-854 / 0140J).